The sequence spans 354 residues: MTTVIQRRSTSNVWEQFCEWVTSTDNRLYIGWFGVLMIPTLLTATTCFIIAFIGAPPVDIDGIREPVSGSLLYGNNIITGAVVPSSAAIGLHFYPIWEAASLDEWLYNGGPYQLIVLHFLIGVFCYMGREWELSYRLGMRPWIAVAYSAPVAAATAVFLIYPIGQGSFSDGMPLGISGTFNFMLVFQAEHNILMHPFHQLGVAGVFGGALFSAMHGSLVTSSLIRETSEEESQNLGYKFGQEEETYNIVAAHGYFGRLIFQYASFNNSRSLHFFLAAWPVIGIWFTALGISIMAFNLNGFNFNQSIVDSNGRVVGTWADVLNRANLGMEVMHERNAHNFPLDLAAVEVAPAVRG.

The next 3 helical transmembrane spans lie at 29–46 (YIGW…TATT), 118–133 (HFLI…EWEL), and 142–156 (WIAV…AATA). H118 contacts chlorophyll a. Y126 provides a ligand contact to pheophytin a. [CaMn4O5] cluster is bound by residues D170 and E189. Residues 197-218 (FHQLGVAGVFGGALFSAMHGSL) form a helical membrane-spanning segment. H198 lines the chlorophyll a pocket. A quinone contacts are provided by residues H215 and 264-265 (SF). H215 provides a ligand contact to Fe cation. A Fe cation-binding site is contributed by H272. A helical transmembrane segment spans residues 274 to 288 (FLAAWPVIGIWFTAL). [CaMn4O5] cluster-binding residues include H332, E333, D342, and A344. A propeptide spanning residues 345 to 354 (AVEVAPAVRG) is cleaved from the precursor.

This sequence belongs to the reaction center PufL/M/PsbA/D family. In terms of assembly, PSII is composed of 1 copy each of membrane proteins PsbA, PsbB, PsbC, PsbD, PsbE, PsbF, PsbH, PsbI, PsbJ, PsbK, PsbL, PsbM, PsbT, PsbX, PsbY, PsbZ, Psb30/Ycf12, peripheral proteins PsbO, CyanoQ (PsbQ), PsbU, PsbV and a large number of cofactors. It forms dimeric complexes. The D1/D2 heterodimer binds P680, chlorophylls that are the primary electron donor of PSII, and subsequent electron acceptors. It shares a non-heme iron and each subunit binds pheophytin, quinone, additional chlorophylls, carotenoids and lipids. D1 provides most of the ligands for the Mn4-Ca-O5 cluster of the oxygen-evolving complex (OEC). There is also a Cl(-1) ion associated with D1 and D2, which is required for oxygen evolution. The PSII complex binds additional chlorophylls, carotenoids and specific lipids. serves as cofactor. Tyr-161 forms a radical intermediate that is referred to as redox-active TyrZ, YZ or Y-Z. Post-translationally, C-terminally processed by CtpA; processing is essential to allow assembly of the oxygen-evolving complex and thus photosynthetic growth.

It is found in the cellular thylakoid membrane. It catalyses the reaction 2 a plastoquinone + 4 hnu + 2 H2O = 2 a plastoquinol + O2. In terms of biological role, photosystem II (PSII) is a light-driven water:plastoquinone oxidoreductase that uses light energy to abstract electrons from H(2)O, generating O(2) and a proton gradient subsequently used for ATP formation. It consists of a core antenna complex that captures photons, and an electron transfer chain that converts photonic excitation into a charge separation. The D1/D2 (PsbA/PsbD) reaction center heterodimer binds P680, the primary electron donor of PSII as well as several subsequent electron acceptors. The protein is Photosystem II protein D1 3 of Synechococcus sp. (strain JA-3-3Ab) (Cyanobacteria bacterium Yellowstone A-Prime).